The sequence spans 865 residues: Adenylate cyclase (865 aa).

The interval 1 to 540 (MYLYIETLKQ…DISSHFPIRL (540 aa)) is catalytic. Positions 546–865 (KALYSPCEIR…FNDYQAVHHH (320 aa)) are regulatory.

It belongs to the adenylyl cyclase class-1 family.

It is found in the cytoplasm. It carries out the reaction ATP = 3',5'-cyclic AMP + diphosphate. The protein is Adenylate cyclase (cya) of Proteus mirabilis.